We begin with the raw amino-acid sequence, 296 residues long: Probable GTP 3',8-cyclase (296 aa).

The region spanning E5–K230 is the Radical SAM core domain. R14 is a binding site for GTP. [4Fe-4S] cluster contacts are provided by C21 and C25. An S-adenosyl-L-methionine-binding site is contributed by Y27. Residue C28 participates in [4Fe-4S] cluster binding. K61 provides a ligand contact to GTP. G65 is a binding site for S-adenosyl-L-methionine. T89 contributes to the GTP binding site. S113 contacts S-adenosyl-L-methionine. A GTP-binding site is contributed by K150. Residues C245 and C248 each contribute to the [4Fe-4S] cluster site. Residue R250–R252 coordinates GTP. Residue C262 participates in [4Fe-4S] cluster binding.

Belongs to the radical SAM superfamily. MoaA family. [4Fe-4S] cluster serves as cofactor.

The enzyme catalyses GTP + AH2 + S-adenosyl-L-methionine = (8S)-3',8-cyclo-7,8-dihydroguanosine 5'-triphosphate + 5'-deoxyadenosine + L-methionine + A + H(+). The protein operates within cofactor biosynthesis; molybdopterin biosynthesis. Its function is as follows. Catalyzes the cyclization of GTP to (8S)-3',8-cyclo-7,8-dihydroguanosine 5'-triphosphate. This is Probable GTP 3',8-cyclase from Archaeoglobus fulgidus (strain ATCC 49558 / DSM 4304 / JCM 9628 / NBRC 100126 / VC-16).